We begin with the raw amino-acid sequence, 361 residues long: [LysW]-lysine hydrolase (361 aa).

Zn(2+) is bound at residue His67. Residue Asp69 is part of the active site. Asp91 contributes to the Zn(2+) binding site. Glu124 serves as the catalytic Proton acceptor. Residues Glu125, Glu148, and His326 each contribute to the Zn(2+) site.

It belongs to the peptidase M20A family. LysK subfamily. As to quaternary structure, homotetramer and homooctamer. It depends on Zn(2+) as a cofactor. Co(2+) is required as a cofactor.

The protein resides in the cytoplasm. It catalyses the reaction [amino-group carrier protein]-C-terminal-gamma-(L-lysyl)-L-glutamate + H2O = [amino-group carrier protein]-C-terminal-L-glutamate + L-lysine. It functions in the pathway amino-acid biosynthesis; L-lysine biosynthesis via AAA pathway; L-lysine from L-alpha-aminoadipate (Thermus route): step 5/5. In terms of biological role, catalyzes the release of L-lysine from [LysW]-gamma-L-lysine. In vitro, can deacetylate both N(2)-acetyl-L-lysine and N(2)-acetyl-L-ornithine. The protein is [LysW]-lysine hydrolase of Thermus thermophilus (strain ATCC BAA-163 / DSM 7039 / HB27).